A 2077-amino-acid polypeptide reads, in one-letter code: Large tegument protein deneddylase (2077 aa).

Positions 1-231 (MKIITSSTNQ…PDIAITLDKF (231 aa)) are deubiquitination activity. Residues 3–221 (IITSSTNQND…ELLILKTYKD (219 aa)) enclose the Peptidase C76 domain. Residues cysteine 23, aspartate 156, and histidine 158 contribute to the active site. Position 287 (serine 287) is a region of interest, interaction with inner tegument protein.

The protein belongs to the herpesviridae large tegument protein family. Interacts with host CUL1 and CUL4A; these interactions inhibit the E3 ligase activity of cullins. Interacts with inner tegument protein. Interacts with capsid vertex specific component CVC2. Interacts with the major capsid protein/MCP.

Its subcellular location is the virion tegument. It is found in the host cytoplasm. The protein resides in the host nucleus. The catalysed reaction is Thiol-dependent hydrolysis of ester, thioester, amide, peptide and isopeptide bonds formed by the C-terminal Gly of ubiquitin (a 76-residue protein attached to proteins as an intracellular targeting signal).. Its function is as follows. Large tegument protein that plays multiple roles in the viral cycle. During viral entry, remains associated with the capsid while most of the tegument is detached and participates in the capsid transport toward the host nucleus. Plays a role in the routing of the capsid at the nuclear pore complex and subsequent uncoating. Within the host nucleus, acts as a deneddylase and promotes the degradation of nuclear CRLs (cullin-RING ubiquitin ligases) and thereby stabilizes nuclear CRL substrates, while cytoplasmic CRLs remain unaffected. These modifications prevent host cell cycle S-phase progression and create a favorable environment allowing efficient viral genome replication. Participates later in the secondary envelopment of capsids. Indeed, plays a linker role for the association of the outer viral tegument to the capsids together with the inner tegument protein. The protein is Large tegument protein deneddylase (U31) of Homo sapiens (Human).